Reading from the N-terminus, the 314-residue chain is Ornithine carbamoyltransferase (314 aa).

Carbamoyl phosphate contacts are provided by residues 61 to 64 (STRT), Q88, R112, and 139 to 142 (HPCQ). L-ornithine is bound by residues N170, D234, and 238 to 239 (SM). Residues 274–275 (CL) and R302 contribute to the carbamoyl phosphate site.

It belongs to the aspartate/ornithine carbamoyltransferase superfamily. OTCase family.

It localises to the cytoplasm. It carries out the reaction carbamoyl phosphate + L-ornithine = L-citrulline + phosphate + H(+). It functions in the pathway amino-acid biosynthesis; L-arginine biosynthesis; L-arginine from L-ornithine and carbamoyl phosphate: step 1/3. In terms of biological role, reversibly catalyzes the transfer of the carbamoyl group from carbamoyl phosphate (CP) to the N(epsilon) atom of ornithine (ORN) to produce L-citrulline. In Anoxybacillus flavithermus (strain DSM 21510 / WK1), this protein is Ornithine carbamoyltransferase.